Consider the following 144-residue polypeptide: D-aminoacyl-tRNA deacylase (144 aa).

Residues 136 to 137 (GP) carry the Gly-cisPro motif, important for rejection of L-amino acids motif.

It belongs to the DTD family. As to quaternary structure, homodimer.

The protein resides in the cytoplasm. It carries out the reaction glycyl-tRNA(Ala) + H2O = tRNA(Ala) + glycine + H(+). It catalyses the reaction a D-aminoacyl-tRNA + H2O = a tRNA + a D-alpha-amino acid + H(+). An aminoacyl-tRNA editing enzyme that deacylates mischarged D-aminoacyl-tRNAs. Also deacylates mischarged glycyl-tRNA(Ala), protecting cells against glycine mischarging by AlaRS. Acts via tRNA-based rather than protein-based catalysis; rejects L-amino acids rather than detecting D-amino acids in the active site. By recycling D-aminoacyl-tRNA to D-amino acids and free tRNA molecules, this enzyme counteracts the toxicity associated with the formation of D-aminoacyl-tRNA entities in vivo and helps enforce protein L-homochirality. The protein is D-aminoacyl-tRNA deacylase of Vibrio parahaemolyticus serotype O3:K6 (strain RIMD 2210633).